Reading from the N-terminus, the 85-residue chain is Putative septation protein SpoVG (85 aa).

This sequence belongs to the SpoVG family.

Functionally, could be involved in septation. In Archaeoglobus fulgidus (strain ATCC 49558 / DSM 4304 / JCM 9628 / NBRC 100126 / VC-16), this protein is Putative septation protein SpoVG.